The following is a 93-amino-acid chain: UPF0298 protein lwe2074 (93 aa).

This sequence belongs to the UPF0298 family.

Its subcellular location is the cytoplasm. The sequence is that of UPF0298 protein lwe2074 from Listeria welshimeri serovar 6b (strain ATCC 35897 / DSM 20650 / CCUG 15529 / CIP 8149 / NCTC 11857 / SLCC 5334 / V8).